A 201-amino-acid polypeptide reads, in one-letter code: MELQVVGANNALTVSETTFGREFNEALIHQVVVAYAAGARQGSRAQKTRAEVSGSGKKPWRQKGTGRARSGDIKSPIWRSGGITFAAKPQDHSQKVNKKMYRGAIKSILSELVRQDRLVVVEKFEIDAPKTKVLAQKLKDMALNDALIITASLDENLFLAARNLYKVDVRDVQGIDPVSLIAFDKVVVTVDAVKQIEEMLA.

The interval Arg-44–Gly-71 is disordered.

This sequence belongs to the universal ribosomal protein uL4 family. In terms of assembly, part of the 50S ribosomal subunit.

Functionally, one of the primary rRNA binding proteins, this protein initially binds near the 5'-end of the 23S rRNA. It is important during the early stages of 50S assembly. It makes multiple contacts with different domains of the 23S rRNA in the assembled 50S subunit and ribosome. In terms of biological role, forms part of the polypeptide exit tunnel. The sequence is that of Large ribosomal subunit protein uL4 from Actinobacillus succinogenes (strain ATCC 55618 / DSM 22257 / CCUG 43843 / 130Z).